The sequence spans 348 residues: Bombesin receptor-activated protein C6orf89 homolog (348 aa).

At 1–58 the chain is on the cytoplasmic side; the sequence is MDLAANEISIYDKLSETVDLVRQTGHQCGMSEKAIEKFIRQLLEKNEPQRGPPQYPLL. A helical membrane pass occupies residues 59–79; sequence IAVYKVLLTLGLILFTAYFVI. Residues 80–348 are Extracellular-facing; the sequence is QPFSSLAPEP…ICDGTTLSDL (269 aa).

In terms of assembly, homodimer. Interacts with BRS3. Interacts (via N-terminus) with SIN3B. Post-translationally, glycosylated.

The protein resides in the golgi apparatus membrane. It localises to the cytoplasm. Exhibits histone deacetylase (HDAC) enhancer properties. May play a role in cell cycle progression and wound repair of bronchial epithelial cells. The chain is Bombesin receptor-activated protein C6orf89 homolog from Mus musculus (Mouse).